The primary structure comprises 199 residues: Glycerol-3-phosphate acyltransferase (199 aa).

Transmembrane regions (helical) follow at residues 5–25, 51–71, 79–99, 112–132, and 153–173; these read AFLV…VALV, KLGV…VLCA, VFLS…VFLY, VFLG…VAVI, and CAWL…GLVI.

It belongs to the PlsY family. As to quaternary structure, probably interacts with PlsX.

The protein localises to the cell inner membrane. The enzyme catalyses an acyl phosphate + sn-glycerol 3-phosphate = a 1-acyl-sn-glycero-3-phosphate + phosphate. It functions in the pathway lipid metabolism; phospholipid metabolism. Functionally, catalyzes the transfer of an acyl group from acyl-phosphate (acyl-PO(4)) to glycerol-3-phosphate (G3P) to form lysophosphatidic acid (LPA). This enzyme utilizes acyl-phosphate as fatty acyl donor, but not acyl-CoA or acyl-ACP. The protein is Glycerol-3-phosphate acyltransferase of Solidesulfovibrio magneticus (strain ATCC 700980 / DSM 13731 / RS-1) (Desulfovibrio magneticus).